The chain runs to 504 residues: Anaerobic nitric oxide reductase transcription regulator NorR (504 aa).

4-aspartylphosphate is present on D57. The Sigma-54 factor interaction domain occupies 187 to 416 (MIGLSPGMTQ…LEHAIHRAVV (230 aa)). ATP contacts are provided by residues 215–222 (GETGTGKE) and 278–287 (ADNGTLFLDE). Residues 479–498 (WAASARMLETDVANLHRLAK) constitute a DNA-binding region (H-T-H motif).

Its pathway is nitrogen metabolism; nitric oxide reduction. In terms of biological role, required for the expression of anaerobic nitric oxide (NO) reductase, acts as a transcriptional activator for at least the norVW operon. Activation also requires sigma-54. The sequence is that of Anaerobic nitric oxide reductase transcription regulator NorR from Escherichia coli O7:K1 (strain IAI39 / ExPEC).